The sequence spans 683 residues: MARTQVPDPATSAPAERALWLRDELERANYAYYVLDQPDLPDAEYDRLFKELQQIESEHPDLITPDSPTQRVGGEVASGFRPVVHDMPMLSLNNGFSDEDIAAFDKRVSDTLHHTPVDYACELKFDGLAISLRYVDGQFTQAATRGDGATGEDVTENVRTIRSIPLKLKGKRVPKLVDVRGEVLMFRRDFDKLNQRQRDAGQREFANPRNAAAGSLRQLDPKMTAQRPLSFFAYGIGVLDGIEMPGTHSELLDWYHEMGLPVNSERAVVQGAEGVLGFFHKVGEKRDKLPYDIDGVVYKVNRRDEQDALGFVSRAPRFALAHKFPAQEALTKLIAIDVQVGRTGAITPVARLEPVFVGGATVTNATLHNEDEVRRKDIRIGDTVIVRRAGDVIPEVVGALLERRPPDAREFVMPTQCPVCGSAIERLPDEAIARCSGGLFCPAQRKQALWHFAQRRALDIDGLGEKIIDQLVELNLVRTPADLFNLGFATLAELDRFAEKSAQNLIDSLEKAKHTTLARFIYALGIRHVGESTAKDLARHFGSLDPIMSATVEELLEVNDVGPIVAEAIHQFFAEEHNRTVIEQLRAPGKVTWAEGPPAPKAPQGVLAGKTVVLTGTLPNMGRDEAKELLEAAGAKVAGSVSKKTDYVVAGAEAGSKLAKAEELGIPVLDEDGMRKLLEGQTT.

NAD(+) is bound by residues aspartate 42–aspartate 46, serine 91–leucine 92, and glutamate 122. Residue lysine 124 is the N6-AMP-lysine intermediate of the active site. 4 residues coordinate NAD(+): arginine 145, glutamate 182, lysine 299, and lysine 323. Positions 417, 420, 435, and 441 each coordinate Zn(2+). Residues alanine 602–threonine 683 form the BRCT domain.

It belongs to the NAD-dependent DNA ligase family. LigA subfamily. Requires Mg(2+) as cofactor. The cofactor is Mn(2+).

The catalysed reaction is NAD(+) + (deoxyribonucleotide)n-3'-hydroxyl + 5'-phospho-(deoxyribonucleotide)m = (deoxyribonucleotide)n+m + AMP + beta-nicotinamide D-nucleotide.. DNA ligase that catalyzes the formation of phosphodiester linkages between 5'-phosphoryl and 3'-hydroxyl groups in double-stranded DNA using NAD as a coenzyme and as the energy source for the reaction. It is essential for DNA replication and repair of damaged DNA. This Paraburkholderia phymatum (strain DSM 17167 / CIP 108236 / LMG 21445 / STM815) (Burkholderia phymatum) protein is DNA ligase.